We begin with the raw amino-acid sequence, 239 residues long: MINDVISPEFDENGRALRRIRSFVRRQGRLTKGQQLALDSYWPVMGVEYQAAPVDLNTLFGREAPVVLEIGFGMGTSLVTMAANNPQQNFLGIEVHSPGVGACLSSAHDAGLSNLRIMCHDAVEVLENMIPEASLDMVQLFFPDPWHKARHNKRRIVQTPFVELVKSKLKVGGVFHMATDWQPYAEHMLEVMSGVSGYLNLSEQNDYVPRPDSRPLTKFELRGQRLGHGVWDLMFERKE.

Positions 69, 94, 121, and 144 each coordinate S-adenosyl-L-methionine. The active site involves Asp144. Lys148 serves as a coordination point for substrate. The interaction with RNA stretch occupies residues 150–155; it reads RHNKRR. Residues Asp180 and 217–220 contribute to the substrate site; that span reads TKFE.

It belongs to the class I-like SAM-binding methyltransferase superfamily. TrmB family. In terms of assembly, monomer.

It catalyses the reaction guanosine(46) in tRNA + S-adenosyl-L-methionine = N(7)-methylguanosine(46) in tRNA + S-adenosyl-L-homocysteine. It functions in the pathway tRNA modification; N(7)-methylguanine-tRNA biosynthesis. In terms of biological role, catalyzes the formation of N(7)-methylguanine at position 46 (m7G46) in tRNA. In Yersinia pseudotuberculosis serotype I (strain IP32953), this protein is tRNA (guanine-N(7)-)-methyltransferase.